The following is a 538-amino-acid chain: Probable bifunctional riboflavin biosynthesis protein RIBA 1, chloroplastic (538 aa).

The span at 1–16 (MSRLSSIYSQHRTSGL) shows a compositional bias: polar residues. Residues 1-29 (MSRLSSIYSQHRTSGLRSDRSIMPNSTSN) are disordered. The transit peptide at 1–73 (MSRLSSIYSQ…NGQASPSKVV (73 aa)) directs the protein to the chloroplast. Residues 46-311 (RNFHISHAVG…IADLIRYRRK (266 aa)) are DHBP synthase. D-ribulose 5-phosphate contacts are provided by residues 134-135 (RE), Asp139, 249-253 (RAGHT), and Glu273. Glu135 serves as a coordination point for Mg(2+). Mg(2+) is bound at residue His252. Residues 312 to 530 (RDRLVERVCV…DGGIKKEQDQ (219 aa)) form a GTP cyclohydrolase II region. GTP is bound at residue 362–366 (RVHSE). Residues Cys367, Cys378, and Cys380 each coordinate Zn(2+). GTP-binding positions include Gln383, 406-408 (EGR), and Thr428. Asp440 (proton acceptor; for GTP cyclohydrolase activity) is an active-site residue. The Nucleophile; for GTP cyclohydrolase activity role is filled by Arg442. The GTP site is built by Thr463 and Lys468. The interval 506–538 (HVYGTRPSGNTSTLADGGIKKEQDQIDSASEQE) is disordered.

In the N-terminal section; belongs to the DHBP synthase family. It in the C-terminal section; belongs to the GTP cyclohydrolase II family. It depends on Mg(2+) as a cofactor. The cofactor is Mn(2+). Requires Zn(2+) as cofactor.

It localises to the plastid. The protein resides in the chloroplast. The enzyme catalyses D-ribulose 5-phosphate = (2S)-2-hydroxy-3-oxobutyl phosphate + formate + H(+). The catalysed reaction is GTP + 4 H2O = 2,5-diamino-6-hydroxy-4-(5-phosphoribosylamino)-pyrimidine + formate + 2 phosphate + 3 H(+). It functions in the pathway cofactor biosynthesis; riboflavin biosynthesis; 2-hydroxy-3-oxobutyl phosphate from D-ribulose 5-phosphate: step 1/1. The protein operates within cofactor biosynthesis; riboflavin biosynthesis; 5-amino-6-(D-ribitylamino)uracil from GTP: step 1/4. Its function is as follows. Involved in riboflavin biosynthesis. Catalyzes both the conversion of D-ribulose 5-phosphate to formate and 3,4-dihydroxy-2-butanone 4-phosphate and the conversion of GTP to 2,5-diamino-6-ribosylamino-4(3H)-pyrimidinone 5'-phosphate (DARP), formate and pyrophosphate. This chain is Probable bifunctional riboflavin biosynthesis protein RIBA 1, chloroplastic (RIBA1), found in Oryza sativa subsp. japonica (Rice).